The chain runs to 370 residues: Trans-enoyl reductase xenG (370 aa).

Residues 1-32 (MASTGLPQLPPSQKAVIQSEKTPGAFEVSENR) are disordered. NADP(+) contacts are provided by residues 54–57 (CDWK), 177–180 (STAS), 200–203 (SPKN), Tyr-218, 265–266 (FE), and 356–357 (VS).

This sequence belongs to the zinc-containing alcohol dehydrogenase family. As to quaternary structure, monomer.

Its pathway is mycotoxin biosynthesis. Trans-enoyl reductase; part of the gene cluster that mediates the biosynthesis of xenoacremones such as xenoacremone A, a compound that shows inhibitory activity toward the PI3K/AKT signaling pathway and which has the ability to induce apoptosis of A549 lung cancer cells. Within the pathway, cooperation of the hybrid PKS-NRPS xenE and the trans-acting enoyl reductase xenG is responsible for the formation of the reduced tyrosine-nonaketide derivative. The alpha/beta hydrolase xenA then accelerates intramolecular nucleophilic attack to give a pyrrolidone derivative. Subsequently, three enzymes, xenF, xenD, and xenC, coordinately participate in the conversion to xenoacremone B. XenF catalyzes sigmatropic rearrangement to form an A-ring, which leads to an unusual intermediate with a hexane ring, which is required for the formation of the tricarbocyclic product. Epoxidation catalyzed by xenD and the formation of the paracyclophane ether catalyzed by xenC initiate a spontaneous intramolecular Diels-Alder (IMDA) reaction to yield xenoacremone B. Spontaneous hydration of xenoacremone B leads to the formation of xenoacremone A, which undergoes subsequent methylation to afford xenoacremone C. The protein is Trans-enoyl reductase xenG of Xenoacremonium sinensis (Endophyte fungus).